A 77-amino-acid chain; its full sequence is Putative defensin-like protein 158 (77 aa).

Residues 1 to 24 form the signal peptide; it reads MANISWSHFLILMLVFSVVKKGKG. 4 cysteine pairs are disulfide-bonded: Cys-31–Cys-77, Cys-41–Cys-60, Cys-46–Cys-71, and Cys-50–Cys-73.

It belongs to the DEFL family.

Its subcellular location is the secreted. In Arabidopsis thaliana (Mouse-ear cress), this protein is Putative defensin-like protein 158 (LCR23).